The chain runs to 296 residues: Putative mannose 6-phosphate receptor-like protein C530.09c (296 aa).

A signal peptide spans 1 to 25 (MRLLTCLINVLAGLTLFSQFQRAFG). The Lumenal segment spans residues 26–206 (LTITRRGFKV…TVKKDSTLNP (181 aa)). Residues 42-197 (PFCALHHPNT…EWKTIHACPT (156 aa)) form the MRH domain. A disulfide bridge connects residues cysteine 44 and cysteine 87. 5 N-linked (GlcNAc...) asparagine glycosylation sites follow: asparagine 64, asparagine 81, asparagine 93, asparagine 96, and asparagine 143. 2 disulfide bridges follow: cysteine 147/cysteine 183 and cysteine 163/cysteine 195. A helical membrane pass occupies residues 207–227 (VSVFLLFCAIAFLAYFVGGFV). The Cytoplasmic portion of the chain corresponds to 228–249 (YQRVVLNARGLRQIPNYEMWRS). The chain crosses the membrane as a helical span at residues 250 to 270 (LFGFISDIVIILYSSILSILP). Residues 271–296 (SSITRMRGNRRNIDYVEDALIDDIDT) lie on the Lumenal side of the membrane.

This sequence belongs to the MRL1/IGF2R family.

Its subcellular location is the golgi apparatus. It localises to the trans-Golgi network membrane. The protein resides in the endosome membrane. This chain is Putative mannose 6-phosphate receptor-like protein C530.09c, found in Schizosaccharomyces pombe (strain 972 / ATCC 24843) (Fission yeast).